We begin with the raw amino-acid sequence, 318 residues long: Mediator of RNA polymerase II transcription subunit 30 (318 aa).

A compositionally biased stretch (low complexity) spans 1-13; the sequence is MWKYGQNQGNQGP. Disordered regions lie at residues 1–92 and 120–142; these read MWKY…QQQQ and GGGVVPQQQQQQPQQNMPQQNIP. The span at 14–33 shows a compositional bias: gly residues; sequence SSGGGGGGGPNMMPMGGFGM. Low complexity-rich tracts occupy residues 34 to 55, 78 to 92, and 124 to 142; these read QHGNMQQMHMSPQHQQQQQQMG, PGMSPQHQMQQQQQQ, and VPQQQQQQPQQNMPQQNIP.

Belongs to the Mediator complex subunit 30 family. Component of the Mediator complex, which includes at least CDK8, MED4, MED6, MED11, MED14, MED17, MED18, MED20, MED21, MED22, MED27, MED28, MED30 and MED31.

It is found in the nucleus. In terms of biological role, component of the Mediator complex, a coactivator involved in the regulated transcription of nearly all RNA polymerase II-dependent genes. Mediator functions as a bridge to convey information from gene-specific regulatory proteins to the basal RNA polymerase II transcription machinery. Mediator is recruited to promoters by direct interactions with regulatory proteins and serves as a scaffold for the assembly of a functional preinitiation complex with RNA polymerase II and the general transcription factors. This Drosophila melanogaster (Fruit fly) protein is Mediator of RNA polymerase II transcription subunit 30 (MED30).